Consider the following 271-residue polypeptide: Probable septum site-determining protein MinC (271 aa).

The segment at 106-125 is disordered; it reads RRAPSPKAADDAPAQPEEPR. Residues 110-119 are compositionally biased toward low complexity; that stretch reads SPKAADDAPA.

The protein belongs to the MinC family. In terms of assembly, interacts with MinD and FtsZ.

Functionally, cell division inhibitor that blocks the formation of polar Z ring septums. Rapidly oscillates between the poles of the cell to destabilize FtsZ filaments that have formed before they mature into polar Z rings. Prevents FtsZ polymerization. This chain is Probable septum site-determining protein MinC, found in Burkholderia thailandensis (strain ATCC 700388 / DSM 13276 / CCUG 48851 / CIP 106301 / E264).